The following is a 627-amino-acid chain: Polyadenylate-binding protein, cytoplasmic and nuclear (627 aa).

Over residues 1–11 (MSAADANQVQE) the composition is skewed to polar residues. The disordered stretch occupies residues 1-46 (MSAADANQVQESLEKLNLDSAPVASTEETEQTASGETEEAADSAQV). 4 consecutive RRM domains span residues 51–129 (ASLY…WSQR), 139–216 (GNIF…KHIS), 232–309 (TNVY…RAQK), and 335–412 (VNLF…LAQR). Residues 511–535 (DFNNGANGGRQQRGYYPNRNQNQKG) are compositionally biased toward low complexity. The tract at residues 511-537 (DFNNGANGGRQQRGYYPNRNQNQKGRQ) is disordered. Positions 537–618 (QQKDLAAIIA…ALTAFEEYKK (82 aa)) constitute a PABC domain.

It belongs to the polyadenylate-binding protein type-1 family.

The protein resides in the cytoplasm. It localises to the nucleus. In terms of biological role, binds the poly(A) tail of mRNA. Appears to be an important mediator of the multiple roles of the poly(A) tail in mRNA biogenesis, stability and translation. In the nucleus, involved in both mRNA cleavage and polyadenylation. Is also required for efficient mRNA export to the cytoplasm. Acts in concert with a poly(A)-specific nuclease (PAN) to affect poly(A) tail shortening, which may occur concomitantly with either nucleocytoplasmic mRNA transport or translational initiation. In the cytoplasm, stimulates translation initiation and regulates mRNA decay through translation termination-coupled poly(A) shortening, probably mediated by PAN. This is Polyadenylate-binding protein, cytoplasmic and nuclear (PAB1) from Debaryomyces hansenii (strain ATCC 36239 / CBS 767 / BCRC 21394 / JCM 1990 / NBRC 0083 / IGC 2968) (Yeast).